A 675-amino-acid polypeptide reads, in one-letter code: Acetyl-coenzyme A synthetase 1 (675 aa).

The segment covering 1 to 10 (MPESTQQSHL) has biased composition (polar residues). Residues 1–32 (MPESTQQSHLSLDHEKMQQPPKGFTERSKTKP) are disordered. Residues 212–215 (RGGK) and Thr-331 contribute to the CoA site. ATP is bound by residues 407–409 (GEP), 431–436 (DTYWQT), Asp-522, and Arg-537. CoA is bound at residue Ser-545. Arg-548 contributes to the ATP binding site. Residue Arg-609 coordinates CoA.

Belongs to the ATP-dependent AMP-binding enzyme family.

The catalysed reaction is acetate + ATP + CoA = acetyl-CoA + AMP + diphosphate. This chain is Acetyl-coenzyme A synthetase 1 (ACS1), found in Candida albicans (Yeast).